Reading from the N-terminus, the 940-residue chain is Coatomer subunit beta (940 aa).

HEAT repeat units follow at residues phenylalanine 11–serine 48, glutamine 90–glutamate 125, leucine 126–histidine 162, and serine 310–valine 347.

Oligomeric complex that consists of at least the alpha, beta, beta', gamma, delta, epsilon and zeta subunits.

The protein localises to the cytoplasm. It is found in the golgi apparatus membrane. The protein resides in the cytoplasmic vesicle. It localises to the COPI-coated vesicle membrane. In terms of biological role, the coatomer is a cytosolic protein complex that binds to dilysine motifs and reversibly associates with Golgi non-clathrin-coated vesicles, which further mediate biosynthetic protein transport from the ER, via the Golgi up to the trans Golgi network. Coatomer complex is required for budding from Golgi membranes, and is essential for the retrograde Golgi-to-ER transport of dilysine-tagged proteins. In Schizosaccharomyces pombe (strain 972 / ATCC 24843) (Fission yeast), this protein is Coatomer subunit beta (sec26).